A 1035-amino-acid chain; its full sequence is Enteropeptidase (1035 aa).

Glycine 2 is lipidated: N-myristoyl glycine. Topologically, residues glycine 2 to glutamate 18 are cytoplasmic. Residues valine 19–valine 47 traverse the membrane as a helical; Signal-anchor for type II membrane protein segment. At lysine 48–histidine 1035 the chain is on the extracellular side. An SEA domain is found at lysine 54–glutamate 169. N-linked (GlcNAc...) asparagine glycosylation is found at asparagine 116, asparagine 147, asparagine 170, and asparagine 194. An LDL-receptor class A 1 domain is found at isoleucine 197–threonine 238. 4 disulfides stabilise this stretch: cysteine 199-cysteine 212, cysteine 206-cysteine 225, cysteine 219-cysteine 236, and cysteine 240-cysteine 269. N-linked (GlcNAc...) asparagine glycans are attached at residues asparagine 233, asparagine 263, asparagine 264, asparagine 404, asparagine 456, asparagine 486, asparagine 519, asparagine 550, and asparagine 646. Residues cysteine 240–phenylalanine 350 enclose the CUB 1 domain. The region spanning tyrosine 358–valine 520 is the MAM domain. Cysteine 540 and cysteine 568 are disulfide-bonded. One can recognise a CUB 2 domain in the interval cysteine 540–glycine 650. The LDL-receptor class A 2 domain occupies glutamate 657–arginine 695. 3 disulfides stabilise this stretch: cysteine 659/cysteine 671, cysteine 666/cysteine 684, and cysteine 678/cysteine 693. The SRCR domain maps to valine 694–serine 787. Residues asparagine 698, asparagine 722, asparagine 741, and asparagine 762 are each glycosylated (N-linked (GlcNAc...) asparagine). Disulfide bonds link cysteine 773-cysteine 783, cysteine 788-cysteine 912, cysteine 826-cysteine 842, cysteine 926-cysteine 993, cysteine 957-cysteine 972, and cysteine 983-cysteine 1011. The Peptidase S1 domain occupies isoleucine 801–histidine 1035. The active-site Charge relay system is histidine 841. An N-linked (GlcNAc...) asparagine glycan is attached at asparagine 864. Aspartate 892 functions as the Charge relay system in the catalytic mechanism. N-linked (GlcNAc...) asparagine glycosylation is found at asparagine 903 and asparagine 965. Residue serine 987 is the Charge relay system of the active site.

Belongs to the peptidase S1 family. In terms of assembly, heterodimer of a catalytic (light) chain and a multidomain (heavy) chain linked by a disulfide bond. The chains are derived from a single precursor that is cleaved by a trypsin-like protease. In terms of tissue distribution, intestinal brush border.

The protein resides in the membrane. It catalyses the reaction Activation of trypsinogen by selective cleavage of 6-Lys-|-Ile-7 bond.. Functionally, responsible for initiating activation of pancreatic proteolytic proenzymes (trypsin, chymotrypsin and carboxypeptidase A). It catalyzes the conversion of trypsinogen to trypsin which in turn activates other proenzymes including chymotrypsinogen, procarboxypeptidases, and proelastases. The sequence is that of Enteropeptidase (TMPRSS15) from Bos taurus (Bovine).